A 358-amino-acid chain; its full sequence is Methylthioribose-1-phosphate isomerase (358 aa).

Substrate is bound by residues 54 to 56, Arg96, and Gln205; that span reads RGA. The active-site Proton donor is the Asp246. Position 256-257 (256-257) interacts with substrate; the sequence is NK.

Belongs to the eIF-2B alpha/beta/delta subunits family. MtnA subfamily.

It catalyses the reaction 5-(methylsulfanyl)-alpha-D-ribose 1-phosphate = 5-(methylsulfanyl)-D-ribulose 1-phosphate. It functions in the pathway amino-acid biosynthesis; L-methionine biosynthesis via salvage pathway; L-methionine from S-methyl-5-thio-alpha-D-ribose 1-phosphate: step 1/6. In terms of biological role, catalyzes the interconversion of methylthioribose-1-phosphate (MTR-1-P) into methylthioribulose-1-phosphate (MTRu-1-P). The protein is Methylthioribose-1-phosphate isomerase of Pseudomonas syringae pv. syringae (strain B728a).